The primary structure comprises 76 residues: Putative antitoxin VapB2 (76 aa).

The protein belongs to the UPF0330 family.

Possibly the antitoxin component of a type II toxin-antitoxin (TA) system. Its cognate toxin is VapC2 (Potential). The polypeptide is Putative antitoxin VapB2 (vapB2) (Pyrococcus abyssi (strain GE5 / Orsay)).